The sequence spans 418 residues: Light-independent protochlorophyllide reductase subunit N (418 aa).

3 residues coordinate [4Fe-4S] cluster: Cys17, Cys42, and Cys103.

It belongs to the BchN/ChlN family. Protochlorophyllide reductase is composed of three subunits; ChlL, ChlN and ChlB. Forms a heterotetramer of two ChlB and two ChlN subunits. It depends on [4Fe-4S] cluster as a cofactor.

It carries out the reaction chlorophyllide a + oxidized 2[4Fe-4S]-[ferredoxin] + 2 ADP + 2 phosphate = protochlorophyllide a + reduced 2[4Fe-4S]-[ferredoxin] + 2 ATP + 2 H2O. It functions in the pathway porphyrin-containing compound metabolism; chlorophyll biosynthesis (light-independent). Its function is as follows. Component of the dark-operative protochlorophyllide reductase (DPOR) that uses Mg-ATP and reduced ferredoxin to reduce ring D of protochlorophyllide (Pchlide) to form chlorophyllide a (Chlide). This reaction is light-independent. The NB-protein (ChlN-ChlB) is the catalytic component of the complex. This chain is Light-independent protochlorophyllide reductase subunit N, found in Prochlorococcus marinus (strain MIT 9313).